A 60-amino-acid chain; its full sequence is Large ribosomal subunit protein uL30 (60 aa).

This sequence belongs to the universal ribosomal protein uL30 family. In terms of assembly, part of the 50S ribosomal subunit.

In Lachnoclostridium phytofermentans (strain ATCC 700394 / DSM 18823 / ISDg) (Clostridium phytofermentans), this protein is Large ribosomal subunit protein uL30.